We begin with the raw amino-acid sequence, 583 residues long: Putative rhophilin-2-like protein RHPN2P1 (583 aa).

In terms of domain architecture, BRO1 spans 26-375 (PLIPLGLKET…RLTYAQHQED (350 aa)). One can recognise a PDZ domain in the interval 412–490 (RSNRFTAEEG…DEIEMKVVSL (79 aa)).

The polypeptide is Putative rhophilin-2-like protein RHPN2P1 (RHPN2P1) (Homo sapiens (Human)).